Reading from the N-terminus, the 157-residue chain is UPF0262 protein Rleg2_0240 (157 aa).

The protein belongs to the UPF0262 family.

This chain is UPF0262 protein Rleg2_0240, found in Rhizobium leguminosarum bv. trifolii (strain WSM2304).